We begin with the raw amino-acid sequence, 228 residues long: Glyceraldehyde 3-phosphate phosphatase (228 aa).

Belongs to the HAD-like hydrolase superfamily. Mg(2+) serves as cofactor.

Its function is as follows. Catalyzes the dephosphorylation of D,L-glyceraldehyde 3-phosphate in vitro. In Methanocaldococcus jannaschii (strain ATCC 43067 / DSM 2661 / JAL-1 / JCM 10045 / NBRC 100440) (Methanococcus jannaschii), this protein is Glyceraldehyde 3-phosphate phosphatase.